A 318-amino-acid polypeptide reads, in one-letter code: DNA repair nuclease/redox regulator APEX1 (318 aa).

A disordered region spans residues 1–59; sequence MPKRGKKGAVVEDAEEPKTEPEAKKSKAGAKKNEKEAVGEGAVLYEDPPDQKTSPSGKS. The interval 2-33 is necessary for interaction with YBX1, binding to RNA, association together with NPM1 to rRNA, endoribonuclease activity on abasic RNA and localization in the nucleoli; sequence PKRGKKGAVVEDAEEPKTEPEAKKSKAGAKKN. N6-acetyllysine; by EP300 occurs at positions 6 and 7. Positions 8-13 match the Nuclear localization signal (NLS) motif; sequence GAVVED. The span at 16 to 38 shows a compositional bias: basic and acidic residues; that stretch reads EPKTEPEAKKSKAGAKKNEKEAV. The interval 23-33 is necessary for interaction with NPM1 and for efficient rRNA binding; sequence AKKSKAGAKKN. 4 positions are modified to N6-acetyllysine: K27, K31, K32, and K35. The residue at position 54 (S54) is a Phosphoserine. A Nuclear export signal (NES) motif is present at residues 64–80; sequence ICSWNVDGLRAWIKKKG. Residue C65 is modified to S-nitrosocysteine; alternate. A disulfide bridge links C65 with C93. D70 contributes to the Mg(2+) binding site. C93 is modified (S-nitrosocysteine; alternate). Mg(2+) is bound at residue E96. Residue Y171 is part of the active site. An N6-acetyllysine modification is found at K197. Mg(2+) is bound by residues D210 and N212. Residue D210 is the Proton donor/acceptor of the active site. Position 233 is a phosphothreonine; by CDK5 (T233). The tract at residues 289-318 is mitochondrial targeting sequence (MTS); sequence QSVLPALCDSKIRSKALGSDHCPITLYLAL. A Mg(2+)-binding site is contributed by D308. C310 is subject to S-nitrosocysteine.

The protein belongs to the DNA repair enzymes AP/ExoA family. In terms of assembly, monomer. Homodimer; disulfide-linked. Component of the SET complex, composed of at least APEX1, SET, ANP32A, HMGB2, NME1 and TREX1. Associates with the dimer XRCC5/XRCC6 in a DNA-dependent manner. Interacts with SIRT1; the interaction is increased in the context of genotoxic stress. Interacts with HDAC1, HDAC2 and HDAC3; the interactions are not dependent on the APEX1 acetylation status. Interacts with XRCC1; the interaction is induced by SIRT1 and increased with the APEX1 acetylated form. Interacts with NPM1 (via N-terminal domain); the interaction is RNA-dependent and decreases in hydrogen peroxide-damaged cells. Interacts (via N-terminus) with YBX1 (via C-terminus); the interaction is increased in presence of APEX1 acetylated at Lys-6 and Lys-7. Interacts with HNRNPL; the interaction is DNA-dependent. Interacts (via N-terminus) with KPNA1 and KPNA2. Interacts with TXN; the interaction stimulates the FOS/JUN AP-1 complex DNA-binding activity in a redox-dependent manner. Interacts with GZMA, KRT8, MDM2, POLB, PRDX6, PRPF19, RPLP0, TOMM20 and WDR77. Binds to CDK5. Mg(2+) is required as a cofactor. Requires Mn(2+) as cofactor. Post-translationally, phosphorylated. Phosphorylation by kinase PKC or casein kinase CK2 results in enhanced redox activity that stimulates binding of the FOS/JUN AP-1 complex to its cognate binding site. AP-endodeoxyribonuclease activity is not affected by CK2-mediated phosphorylation. Phosphorylation of Thr-233 by CDK5 in response to MPP(+)/MPTP (1-methyl-4-phenylpyridinium) reduces AP-endodeoxyribonuclease activity resulting in accumulation of DNA damage and contributing to neuronal death. Acetylated on Lys-6 and Lys-7. Acetylation is increased by the transcriptional coactivator EP300 acetyltransferase, genotoxic agents like H(2)O(2) and methyl methanesulfonate (MMS). Acetylation increases its binding affinity to the negative calcium response element (nCaRE) DNA promoter. The acetylated form induces a stronger binding of YBX1 to the Y-box sequence in the MDR1 promoter than the unacetylated form. Deacetylated on lysines. Lys-6 and Lys-7 are deacetylated by SIRT1. In terms of processing, cleaved at Lys-31 by granzyme A to create the mitochondrial form; leading in reduction of binding to DNA, AP endodeoxyribonuclease activity, redox activation of transcription factors and to enhanced cell death. Cleaved by granzyme K; leading to intracellular ROS accumulation and enhanced cell death after oxidative stress. Post-translationally, cys-69 and Cys-93 are nitrosylated in response to nitric oxide (NO) and lead to the exposure of the nuclear export signal (NES). Ubiquitinated by MDM2; leading to translocation to the cytoplasm and proteasomal degradation. The mitochondrial form is expressed in liver (at protein level). Thymus.

It localises to the nucleus. The protein resides in the nucleolus. It is found in the nucleus speckle. The protein localises to the endoplasmic reticulum. Its subcellular location is the cytoplasm. It localises to the mitochondrion. The catalysed reaction is Exonucleolytic cleavage in the 3'- to 5'-direction to yield nucleoside 5'-phosphates.. With respect to regulation, NPM1 stimulates endodeoxyribonuclease activity on double-stranded DNA with AP sites, but inhibits endoribonuclease activity on single-stranded RNA containing AP sites. In terms of biological role, multifunctional protein that plays a central role in the cellular response to oxidative stress. The two major activities of APEX1 are DNA repair and redox regulation of transcriptional factors. Functions as an apurinic/apyrimidinic (AP) endodeoxyribonuclease in the DNA base excision repair (BER) pathway of DNA lesions induced by oxidative and alkylating agents. Initiates repair of AP sites in DNA by catalyzing hydrolytic incision of the phosphodiester backbone immediately adjacent to the damage, generating a single-strand break with 5'-deoxyribose phosphate and 3'-hydroxyl ends. Also incises at AP sites in the DNA strand of DNA/RNA hybrids, single-stranded DNA regions of R-loop structures, and single-stranded RNA molecules. Has 3'-5' exoribonuclease activity on mismatched deoxyribonucleotides at the 3' termini of nicked or gapped DNA molecules during short-patch BER. Possesses DNA 3' phosphodiesterase activity capable of removing lesions (such as phosphoglycolate) blocking the 3' side of DNA strand breaks. May also play a role in the epigenetic regulation of gene expression by participating in DNA demethylation. Acts as a loading factor for POLB onto non-incised AP sites in DNA and stimulates the 5'-terminal deoxyribose 5'-phosphate (dRp) excision activity of POLB. Plays a role in the protection from granzyme-mediated cellular repair leading to cell death. Also involved in the DNA cleavage step of class switch recombination (CSR). On the other hand, APEX1 also exerts reversible nuclear redox activity to regulate DNA binding affinity and transcriptional activity of transcriptional factors by controlling the redox status of their DNA-binding domain, such as the FOS/JUN AP-1 complex after exposure to IR. Involved in calcium-dependent down-regulation of parathyroid hormone (PTH) expression by binding to negative calcium response elements (nCaREs). Together with HNRNPL or the dimer XRCC5/XRCC6, associates with nCaRE, acting as an activator of transcriptional repression. Stimulates the YBX1-mediated MDR1 promoter activity, when acetylated at Lys-6 and Lys-7, leading to drug resistance. Also acts as an endoribonuclease involved in the control of single-stranded RNA metabolism. Plays a role in regulating MYC mRNA turnover by preferentially cleaving in between UA and CA dinucleotides of the MYC coding region determinant (CRD). In association with NMD1, plays a role in the rRNA quality control process during cell cycle progression. Associates, together with YBX1, on the MDR1 promoter. Together with NPM1, associates with rRNA. Binds DNA and RNA. The protein is DNA repair nuclease/redox regulator APEX1 (APEX1) of Bos taurus (Bovine).